A 138-amino-acid polypeptide reads, in one-letter code: Calmodulin-beta (138 aa).

4 consecutive EF-hand domains span residues Glu1–Asn32, Pro33–Glu68, Asp70–Lys105, and Leu106–Lys138. Residues Asp10, Asp12, Asp14, Thr16, Glu21, Asp46, Asp48, Asn50, Thr52, Glu57, Asp83, Asp85, Asn87, Glu94, Asp119, Asp121, Asp123, Gln125, and Glu130 each contribute to the Ca(2+) site.

The protein belongs to the calmodulin family.

Its function is as follows. Calmodulin mediates the control of a large number of enzymes, ion channels and other proteins by Ca(2+). Among the enzymes to be stimulated by the calmodulin-Ca(2+) complex are a number of protein kinases and phosphatases. The protein is Calmodulin-beta of Arbacia punctulata (Punctuate sea urchin).